The chain runs to 180 residues: Small ribosomal subunit protein uS5 (180 aa).

In terms of domain architecture, S5 DRBM spans 13-76; the sequence is LEERVVQINR…EAAKKNLIRV (64 aa).

It belongs to the universal ribosomal protein uS5 family. In terms of assembly, part of the 30S ribosomal subunit. Contacts proteins S4 and S8.

Functionally, with S4 and S12 plays an important role in translational accuracy. In terms of biological role, located at the back of the 30S subunit body where it stabilizes the conformation of the head with respect to the body. The chain is Small ribosomal subunit protein uS5 from Roseiflexus sp. (strain RS-1).